A 704-amino-acid polypeptide reads, in one-letter code: Elongation factor G (704 aa).

The tr-type G domain occupies 8–290; the sequence is ARYRNIGISA…AVIDYLPAPT (283 aa). GTP-binding positions include 17-24, 88-92, and 142-145; these read AHIDAGKT, DTPGH, and NKMD.

It belongs to the TRAFAC class translation factor GTPase superfamily. Classic translation factor GTPase family. EF-G/EF-2 subfamily.

It is found in the cytoplasm. Functionally, catalyzes the GTP-dependent ribosomal translocation step during translation elongation. During this step, the ribosome changes from the pre-translocational (PRE) to the post-translocational (POST) state as the newly formed A-site-bound peptidyl-tRNA and P-site-bound deacylated tRNA move to the P and E sites, respectively. Catalyzes the coordinated movement of the two tRNA molecules, the mRNA and conformational changes in the ribosome. The chain is Elongation factor G from Pectobacterium atrosepticum (strain SCRI 1043 / ATCC BAA-672) (Erwinia carotovora subsp. atroseptica).